A 153-amino-acid polypeptide reads, in one-letter code: Small ribosomal subunit protein uS15 (153 aa).

This sequence belongs to the universal ribosomal protein uS15 family. In terms of assembly, part of the 30S ribosomal subunit.

The sequence is that of Small ribosomal subunit protein uS15 from Sulfolobus acidocaldarius (strain ATCC 33909 / DSM 639 / JCM 8929 / NBRC 15157 / NCIMB 11770).